Reading from the N-terminus, the 1594-residue chain is Transcription factor Gibbin (1594 aa).

4 disordered regions span residues 19-111 (PDYL…RHWD), 149-241 (LRLS…LADA), 256-307 (QLLE…DPLG), and 367-464 (CSPH…RKGK). The segment covering 30 to 47 (GGPPTPRPLLPTRPPASP) has biased composition (pro residues). At lysine 79 the chain carries N6-acetyllysine. Residues 165–177 (SFFSSPSLANSIR) show a composition bias toward polar residues. Positions 178 to 193 (SPEERANPHTKSERPS) are enriched in basic and acidic residues. Acidic residues predominate over residues 228 to 240 (PEPDGPDYSELAD). Serine 267 carries the phosphoserine modification. Positions 272 to 303 (PQLLDPQPRFLDPQALEPLGEGLELPPLQPLA) are enriched in low complexity. The segment covering 391–401 (ILCRRRKAGRG) has biased composition (basic residues). Positions 395–407 (RRKAGRGRKADSG) form a DNA-binding region, a.T hook 1. A compositionally biased stretch (pro residues) spans 427 to 447 (EPPPLPPPPPPTLSGPGPVPE). Positions 541–553 (KRKRGRPPKNLLL) form a DNA-binding region, a.T hook 2. Residues 578–604 (MPEVKKRRRRKQKLASPQPSYAADAND) are disordered. The residue at position 593 (serine 593) is a Phosphoserine. A Glycyl lysine isopeptide (Lys-Gly) (interchain with G-Cter in SUMO2) cross-link involves residue lysine 606. The tract at residues 714-789 (LTELGHPRKR…PGGQAGRNCG (76 aa)) is disordered. Over residues 734–743 (KPKRKRRSRK) the composition is skewed to basic residues. Serine 825 and serine 842 each carry phosphoserine. Arginine 887 carries the omega-N-methylarginine modification. Serine 892 is modified (phosphoserine). The segment at 942–967 (KLAPPPSAVARSPTTHPPANTYPPQY) is disordered. Residue serine 1060 is modified to Phosphoserine. Disordered stretches follow at residues 1152–1191 (VSET…QSSL) and 1245–1306 (STSA…PDLG). 3 stretches are compositionally biased toward low complexity: residues 1153–1168 (SETF…QFSQ), 1180–1191 (SEASSSEGQSSL), and 1245–1264 (STSA…PRQP). Serine 1180 bears the Phosphoserine mark. A phosphoserine mark is found at serine 1315, serine 1317, and serine 1392. A Phosphothreonine modification is found at threonine 1394. Serine 1396 carries the phosphoserine modification. Lysine 1402 participates in a covalent cross-link: Glycyl lysine isopeptide (Lys-Gly) (interchain with G-Cter in SUMO2). The disordered stretch occupies residues 1495–1525 (HLASPPATPKADKEPLEMARPPGPPRGPAAA). Phosphoserine occurs at positions 1498 and 1540.

The protein localises to the nucleus. It is found in the chromosome. Transcription factor required for the proper patterning of the epidermis, which plays a key role in early epithelial morphogenesis. Directly binds promoter and enhancer regions and acts by maintaining local enhancer-promoter chromatin architecture. Interacts with many sequence-specific zinc-finger transcription factors and methyl-CpG-binding proteins to regulate the expression of mesoderm genes that wire surface ectoderm stratification. In Mus musculus (Mouse), this protein is Transcription factor Gibbin.